We begin with the raw amino-acid sequence, 237 residues long: Small ribosomal subunit protein uS3 (237 aa).

The KH type-2 domain occupies 39-107 (VRQFLTKELK…PAQINISEVR (69 aa)).

It belongs to the universal ribosomal protein uS3 family. As to quaternary structure, part of the 30S ribosomal subunit. Forms a tight complex with proteins S10 and S14.

Functionally, binds the lower part of the 30S subunit head. Binds mRNA in the 70S ribosome, positioning it for translation. This Aeromonas hydrophila subsp. hydrophila (strain ATCC 7966 / DSM 30187 / BCRC 13018 / CCUG 14551 / JCM 1027 / KCTC 2358 / NCIMB 9240 / NCTC 8049) protein is Small ribosomal subunit protein uS3.